Consider the following 1342-residue polypeptide: DNA-directed RNA polymerase subunit beta (1342 aa).

The protein belongs to the RNA polymerase beta chain family. As to quaternary structure, the RNAP catalytic core consists of 2 alpha, 1 beta, 1 beta' and 1 omega subunit. When a sigma factor is associated with the core the holoenzyme is formed, which can initiate transcription.

It catalyses the reaction RNA(n) + a ribonucleoside 5'-triphosphate = RNA(n+1) + diphosphate. DNA-dependent RNA polymerase catalyzes the transcription of DNA into RNA using the four ribonucleoside triphosphates as substrates. This Actinobacillus pleuropneumoniae serotype 3 (strain JL03) protein is DNA-directed RNA polymerase subunit beta.